A 104-amino-acid polypeptide reads, in one-letter code: MNRDEVQLLGFEIVAYAGDARSKLLEALNAAKDSEFDKAEQLVEEANECIANAHKAQTNLLAQEAKGEDIAYSITMIHGQDHLMTTLLLKDLMKHLIELYKKGS.

The PTS EIIA type-3 domain occupies 1–102; sequence MNRDEVQLLG…MKHLIELYKK (102 aa). Residue H78 is the Tele-phosphohistidine intermediate of the active site. Phosphohistidine; by HPr is present on H78. D81 lines the Mg(2+) pocket.

Homotrimer. Mg(2+) serves as cofactor.

It localises to the cytoplasm. Its function is as follows. The phosphoenolpyruvate-dependent sugar phosphotransferase system (sugar PTS), a major carbohydrate active transport system, catalyzes the phosphorylation of incoming sugar substrates concomitantly with their translocation across the cell membrane. The enzyme II LacEF PTS system is involved in lactose transport. This is PTS system lactose-specific EIIA component from Staphylococcus epidermidis (strain ATCC 35984 / DSM 28319 / BCRC 17069 / CCUG 31568 / BM 3577 / RP62A).